The chain runs to 700 residues: DNA topoisomerase 1 (700 aa).

A Toprim domain is found at 3-114 (KNLIIVESPA…TLPRIVFHEI (112 aa)). Residues Glu-9 and Asp-83 each contribute to the Mg(2+) site. A Topo IA-type catalytic domain is found at 130–553 (NMHSVNAQQT…EFYYPFMRKI (424 aa)). Positions 164–169 (SAGRVQ) are interaction with DNA. Tyr-298 functions as the O-(5'-phospho-DNA)-tyrosine intermediate in the catalytic mechanism. 3 consecutive C4-type zinc fingers follow at residues 573–599 (CPDC…FPKC), 629–656 (CPSC…YPKC), and 669–692 (CEEC…CLKC).

This sequence belongs to the type IA topoisomerase family. In terms of assembly, monomer. It depends on Mg(2+) as a cofactor.

It carries out the reaction ATP-independent breakage of single-stranded DNA, followed by passage and rejoining.. In terms of biological role, releases the supercoiling and torsional tension of DNA, which is introduced during the DNA replication and transcription, by transiently cleaving and rejoining one strand of the DNA duplex. Introduces a single-strand break via transesterification at a target site in duplex DNA. The scissile phosphodiester is attacked by the catalytic tyrosine of the enzyme, resulting in the formation of a DNA-(5'-phosphotyrosyl)-enzyme intermediate and the expulsion of a 3'-OH DNA strand. The free DNA strand then undergoes passage around the unbroken strand, thus removing DNA supercoils. Finally, in the religation step, the DNA 3'-OH attacks the covalent intermediate to expel the active-site tyrosine and restore the DNA phosphodiester backbone. The chain is DNA topoisomerase 1 from Campylobacter jejuni subsp. jejuni serotype O:2 (strain ATCC 700819 / NCTC 11168).